Reading from the N-terminus, the 419-residue chain is UDP-N-acetylglucosamine 1-carboxyvinyltransferase (419 aa).

22–23 (KN) serves as a coordination point for phosphoenolpyruvate. Arg-93 provides a ligand contact to UDP-N-acetyl-alpha-D-glucosamine. Catalysis depends on Cys-117, which acts as the Proton donor. Cys-117 is modified (2-(S-cysteinyl)pyruvic acid O-phosphothioketal). UDP-N-acetyl-alpha-D-glucosamine-binding residues include Asp-307 and Ile-329.

Belongs to the EPSP synthase family. MurA subfamily.

It is found in the cytoplasm. It carries out the reaction phosphoenolpyruvate + UDP-N-acetyl-alpha-D-glucosamine = UDP-N-acetyl-3-O-(1-carboxyvinyl)-alpha-D-glucosamine + phosphate. It functions in the pathway cell wall biogenesis; peptidoglycan biosynthesis. Cell wall formation. Adds enolpyruvyl to UDP-N-acetylglucosamine. The protein is UDP-N-acetylglucosamine 1-carboxyvinyltransferase of Shewanella frigidimarina (strain NCIMB 400).